The following is a 316-amino-acid chain: Ribosomal RNA large subunit methyltransferase F (316 aa).

This sequence belongs to the methyltransferase superfamily. METTL16/RlmF family.

Its subcellular location is the cytoplasm. The catalysed reaction is adenosine(1618) in 23S rRNA + S-adenosyl-L-methionine = N(6)-methyladenosine(1618) in 23S rRNA + S-adenosyl-L-homocysteine + H(+). Its function is as follows. Specifically methylates the adenine in position 1618 of 23S rRNA. The protein is Ribosomal RNA large subunit methyltransferase F of Pseudomonas entomophila (strain L48).